Here is a 1442-residue protein sequence, read N- to C-terminus: CD109 antigen (1442 aa).

The N-terminal stretch at 1 to 21 (MRSRRLLSAAHLLCLCAVALA) is a signal peptide. Residues Asn67, Asn117, Asn246, Asn278, Asn370, and Asn421 are each glycosylated (N-linked (GlcNAc...) asparagine). Residues 595-704 (DKSVTLMENS…TWIWLDAYMG (110 aa)) are bait region (approximate). Residues 923–926 (CGEQ) constitute a cross-link (isoglutamyl cysteine thioester (Cys-Gln)). Asn1088 is a glycosylation site (N-linked (GlcNAc...) asparagine). A lipid anchor (GPI-anchor amidated alanine) is attached at Ala1419. Positions 1420-1442 (TDSLRRSSSLLVFCSVLLYFVQH) are cleaved as a propeptide — removed in mature form.

The protein belongs to the protease inhibitor I39 (alpha-2-macroglobulin) family. Heterodimer; disulfide-linked. Interacts with TGFB1 and TGFBR1. Forms a heteromeric complex with TGFBR1, TGFBR2 and TGFBR3 in a ligand-independent manner. N-glycosylated. Post-translationally, 2 forms of 150 (p150) and 120 kDa (p120) exist due to proteolytic degradation from a 180 kDa form.

It localises to the cell membrane. Functionally, modulates negatively TGFB1 signaling in keratinocytes. The chain is CD109 antigen (Cd109) from Mus musculus (Mouse).